The chain runs to 410 residues: Imidazolonepropionase (410 aa).

His-71 and His-73 together coordinate Fe(3+). 2 residues coordinate Zn(2+): His-71 and His-73. 4-imidazolone-5-propanoate contacts are provided by Arg-80, Tyr-143, and His-175. Position 143 (Tyr-143) interacts with N-formimidoyl-L-glutamate. His-235 is a binding site for Fe(3+). His-235 contacts Zn(2+). 4-imidazolone-5-propanoate is bound at residue Glu-238. Asp-309 serves as a coordination point for Fe(3+). Residue Asp-309 participates in Zn(2+) binding.

It belongs to the metallo-dependent hydrolases superfamily. HutI family. Zn(2+) is required as a cofactor. It depends on Fe(3+) as a cofactor.

Its subcellular location is the cytoplasm. The catalysed reaction is 4-imidazolone-5-propanoate + H2O = N-formimidoyl-L-glutamate. The protein operates within amino-acid degradation; L-histidine degradation into L-glutamate; N-formimidoyl-L-glutamate from L-histidine: step 3/3. Catalyzes the hydrolytic cleavage of the carbon-nitrogen bond in imidazolone-5-propanoate to yield N-formimidoyl-L-glutamate. It is the third step in the universal histidine degradation pathway. This Thermoplasma acidophilum (strain ATCC 25905 / DSM 1728 / JCM 9062 / NBRC 15155 / AMRC-C165) protein is Imidazolonepropionase.